A 683-amino-acid polypeptide reads, in one-letter code: ATP-dependent zinc metalloprotease FtsH 2 (683 aa).

A compositionally biased stretch (polar residues) spans 1-12; sequence MADQTSQNDNQN. Residues 1-21 form a disordered region; it reads MADQTSQNDNQNGSGLPGGGP. At 1–28 the chain is on the cytoplasmic side; sequence MADQTSQNDNQNGSGLPGGGPSGTGRGR. The helical transmembrane segment at 29 to 49 threads the bilayer; the sequence is LIIWVIAGTLLALWAYSYWGM. Residues 50 to 136 are Periplasmic-facing; sequence GASGGERISY…VTKPESSFPW (87 aa). A helical membrane pass occupies residues 137-157; it reads GLVIMGLLPVLLLFGVGYIFL. The Cytoplasmic portion of the chain corresponds to 158-683; that stretch reads RRMQSQGQGL…ASGSADASGS (526 aa). Position 228-235 (228-235) interacts with ATP; that stretch reads GPPGTGKT. H450 contacts Zn(2+). Residue E451 is part of the active site. Positions 454 and 526 each coordinate Zn(2+). Residues 627 to 683 form a disordered region; it reads VNGDTDEIGHMPTTNGAAASEENGSADDHEPDEATVIEEDGESGEGRASGSADASGS. A compositionally biased stretch (acidic residues) spans 655–669; sequence HEPDEATVIEEDGES. The segment covering 672 to 683 has biased composition (low complexity); it reads GRASGSADASGS.

It in the central section; belongs to the AAA ATPase family. This sequence in the C-terminal section; belongs to the peptidase M41 family. Homohexamer. It depends on Zn(2+) as a cofactor.

The protein resides in the cell inner membrane. Acts as a processive, ATP-dependent zinc metallopeptidase for both cytoplasmic and membrane proteins. Plays a role in the quality control of integral membrane proteins. This is ATP-dependent zinc metalloprotease FtsH 2 from Salinibacter ruber (strain M8).